Consider the following 114-residue polypeptide: Lectin MVL (114 aa).

Copy 1 of the repeat occupies 2–55; it reads ASYKVNIPAGPLWSNAEAQQVGPKIAAAHQGNFTGQWTTVVESAMSVVEVELQV. A carbohydrate-binding positions include 12 to 16, glutamine 20, and 36 to 44; these read PLWSN and GQWTTVVES. A linker region spans residues 56–60; that stretch reads ENTGI. Repeat unit 2 spans residues 61–114; sequence HEFKTDVLAGPLWSNDEAQKLGPQIAASYGAEFTGQWRTIVEGVMSVIQIKYTF. Residues 71–75, glutamine 79, and 95–103 each bind a carbohydrate; these read PLWSN and GQWRTIVEG.

Homodimer.

The protein resides in the cytoplasm. In terms of biological role, carbohydrate-binding protein that binds oligomannosides such as Man(6)GlcNAc(2) with sub-micromolar affinities. The specificity of MVL is unique in that its minimal target comprises the Man-alpha-(1-&gt;6)-Man-beta-(1-&gt;4)-GlcNAc-beta-(1-&gt;4)-GlcNAc tetrasaccharide core (Man(2)A) found in N-linked oligomannosides. Displays hemagglutininating activity on rabbit, horse and hen erythrocytes. This activity is inhibited by yeast mannan. Does not bind mono- and disaccharides. Inhibits HIV-1 envelope-mediated cell fusion at nanomolar concentrations through carbohydrate-mediated interactions with high-mannose residues on the surface of the HIV envelope glycoprotein gp120. Its function is as follows. Unexpectedly for a lectin, one of the 2 oligomannose binding sites of MVL can catalyze the cleavage of chitin fragments (such as chitotriose, i.e. GlcNAc(3) or GlcNAc-beta-(1-&gt;4)-GlcNAcbeta-(1-&gt;4)-GlcNAc, and chitotetraose, i.e. GlcNAc(4)) to GlcNAc. This weak beta-1,4-glycosidase activity is restricted to the C-terminal carbohydrate-binding site. Does not cleave Man(3)GlcNAc(2) or the tetrasaccharide Man(2)A. This Microcystis viridis (Polycystis viridis) protein is Lectin MVL (mvl).